We begin with the raw amino-acid sequence, 342 residues long: SH3 domain-containing YSC84-like protein 1 (342 aa).

The segment at 218-266 (GQRINARKAAREQRKSSAKELPPKPLSRPQQSSAPVQLNSGSQSNRNEY) is disordered. Residues 226 to 239 (AAREQRKSSAKELP) are compositionally biased toward basic and acidic residues. The segment covering 245–263 (RPQQSSAPVQLNSGSQSNR) has biased composition (polar residues). Positions 283–342 (NQPIEVTALYSFEGQQPGDLNFQAGDRITVISKTDSHFDWWEGKLRGQTGIFPANYVTMN) constitute an SH3 domain.

Belongs to the SH3YL1 family. In terms of assembly, interacts with SH3D19.

In Homo sapiens (Human), this protein is SH3 domain-containing YSC84-like protein 1 (SH3YL1).